Reading from the N-terminus, the 204-residue chain is Thymidylate kinase (204 aa).

11-18 (GLDKSGKT) provides a ligand contact to ATP.

The protein belongs to the thymidylate kinase family.

It catalyses the reaction dTMP + ATP = dTDP + ADP. The protein operates within pyrimidine metabolism; dTTP biosynthesis. The polypeptide is Thymidylate kinase (TMK) (Cowpox virus (strain GRI-90 / Grishak) (CPV)).